Consider the following 538-residue polypeptide: [Pyruvate dehydrogenase [acetyl-transferring]]-phosphatase 1, mitochondrial (538 aa).

The transit peptide at 1–71 (MPAPTQLFFP…WWQYTQGRRY (71 aa)) directs the protein to the mitochondrion. The region spanning 109–525 (VLGFDSNQLP…DDITIIVVQF (417 aa)) is the PPM-type phosphatase domain. Asp-144 and Gly-145 together coordinate Mn(2+). Lys-202 is modified (N6-acetyllysine). Mn(2+) is bound by residues Asp-418 and Asp-516.

The protein belongs to the PP2C family. In terms of assembly, heterodimer of a catalytic (PDP1) and a regulatory (PDPR) subunit. The cofactor is Mn(2+). Mg(2+) is required as a cofactor.

It is found in the mitochondrion. It catalyses the reaction O-phospho-L-seryl-[pyruvate dehydrogenase E1 alpha subunit] + H2O = L-seryl-[pyruvate dehydrogenase E1 alpha subunit] + phosphate. With respect to regulation, magnesium-dependent and calcium-stimulated. PDP1 activity strongly depends on its Ca(2+)-dependent binding to the lipoyl domain of E2 subunit of component of the pyruvate dehydrogenase complex. Its function is as follows. Mitochondrial enzyme that catalyzes the dephosphorylation and concomitant reactivation of the alpha subunit of the E1 component of the pyruvate dehydrogenase complex (PDC), thereby stimulating the conversion of pyruvate into acetyl-CoA. This chain is [Pyruvate dehydrogenase [acetyl-transferring]]-phosphatase 1, mitochondrial (PDP1), found in Bos taurus (Bovine).